The sequence spans 350 residues: UDP-N-acetylenolpyruvoylglucosamine reductase (350 aa).

Positions 24-195 constitute an FAD-binding PCMH-type domain; that stretch reads HVEATARWLL…VAVEFNLPLL (172 aa). The active site involves Arg-172. Ser-245 acts as the Proton donor in catalysis. Residue Glu-342 is part of the active site.

It belongs to the MurB family. The cofactor is FAD.

The protein localises to the cytoplasm. It carries out the reaction UDP-N-acetyl-alpha-D-muramate + NADP(+) = UDP-N-acetyl-3-O-(1-carboxyvinyl)-alpha-D-glucosamine + NADPH + H(+). The protein operates within cell wall biogenesis; peptidoglycan biosynthesis. In terms of biological role, cell wall formation. In Xanthomonas axonopodis pv. citri (strain 306), this protein is UDP-N-acetylenolpyruvoylglucosamine reductase.